A 133-amino-acid chain; its full sequence is MANHDPISDMLTRIRNASEKRHETTRIPASRMSRSIAKVLQKEGFIAQISEEGEGFKTQLVLELKYSGKHRHPTIRSMQRVSKPGLRIYKNTRGLPKILGGLGVAIISTSKGVMSDRDARKQGVGGEVLCYVY.

The tract at residues 1–29 (MANHDPISDMLTRIRNASEKRHETTRIPA) is disordered. Positions 16-25 (NASEKRHETT) are enriched in basic and acidic residues.

Belongs to the universal ribosomal protein uS8 family. In terms of assembly, part of the 30S ribosomal subunit. Contacts proteins S5 and S12.

Its function is as follows. One of the primary rRNA binding proteins, it binds directly to 16S rRNA central domain where it helps coordinate assembly of the platform of the 30S subunit. This chain is Small ribosomal subunit protein uS8, found in Prochlorococcus marinus (strain MIT 9211).